We begin with the raw amino-acid sequence, 240 residues long: UDP-2,3-diacylglucosamine hydrolase (240 aa).

Mn(2+) contacts are provided by D8, H10, D41, N79, and H114. 79–80 (NR) serves as a coordination point for substrate. Substrate contacts are provided by D122, S160, N164, K167, and H195. Mn(2+) contacts are provided by H195 and H197.

This sequence belongs to the LpxH family. Requires Mn(2+) as cofactor.

The protein localises to the cell inner membrane. Its subcellular location is the cytoplasm. The enzyme catalyses UDP-2-N,3-O-bis[(3R)-3-hydroxytetradecanoyl]-alpha-D-glucosamine + H2O = 2-N,3-O-bis[(3R)-3-hydroxytetradecanoyl]-alpha-D-glucosaminyl 1-phosphate + UMP + 2 H(+). Its pathway is glycolipid biosynthesis; lipid IV(A) biosynthesis; lipid IV(A) from (3R)-3-hydroxytetradecanoyl-[acyl-carrier-protein] and UDP-N-acetyl-alpha-D-glucosamine: step 4/6. With respect to regulation, inhibited by a sulfonyl piperazine compound that shows antibacterial activity against E.coli; LpxH is the cellular target of this compound. Inhibited by 0.01% (or more) Triton X-100 in vitro. Hydrolyzes the pyrophosphate bond of UDP-2,3-diacylglucosamine to yield 2,3-diacylglucosamine 1-phosphate (lipid X) and UMP by catalyzing the attack of water at the alpha-P atom. Involved in the biosynthesis of lipid A, a phosphorylated glycolipid that anchors the lipopolysaccharide to the outer membrane of the cell. Is essential for E.coli growth. Does not cleave the unacylated UDP-GlcNAc, the mono-acylated UDP-3-O-(R)-3-hydroxymyristoyl-GlcNAc, and CDP-diacylglycerol. The chain is UDP-2,3-diacylglucosamine hydrolase from Escherichia coli (strain K12).